The primary structure comprises 199 residues: Probable DNA-directed RNA polymerase subunit delta (199 aa).

The HTH HARE-type domain occupies 14–81; that stretch reads LSLIEVAHAI…GDNMWGLRAW (68 aa). Composition is skewed to acidic residues over residues 116–147, 157–171, and 182–199; these read GDDD…DTDD, AGVD…DETL, and LNDD…DESK. The disordered stretch occupies residues 116-199; the sequence is GDDDDVIDYD…DYDDEDDESK (84 aa).

This sequence belongs to the RpoE family. RNAP is composed of a core of 2 alpha, a beta and a beta' subunits. The core is associated with a delta subunit and one of several sigma factors.

Its function is as follows. Participates in both the initiation and recycling phases of transcription. In the presence of the delta subunit, RNAP displays an increased specificity of transcription, a decreased affinity for nucleic acids, and an increased efficiency of RNA synthesis because of enhanced recycling. The protein is Probable DNA-directed RNA polymerase subunit delta of Lactiplantibacillus plantarum (strain ATCC BAA-793 / NCIMB 8826 / WCFS1) (Lactobacillus plantarum).